Reading from the N-terminus, the 365-residue chain is Peptide chain release factor 2 (365 aa).

At Q252 the chain carries N5-methylglutamine.

The protein belongs to the prokaryotic/mitochondrial release factor family. In terms of processing, methylated by PrmC. Methylation increases the termination efficiency of RF2.

The protein localises to the cytoplasm. Its function is as follows. Peptide chain release factor 2 directs the termination of translation in response to the peptide chain termination codons UGA and UAA. The sequence is that of Peptide chain release factor 2 (prfB) from Haemophilus influenzae (strain ATCC 51907 / DSM 11121 / KW20 / Rd).